Reading from the N-terminus, the 276-residue chain is Orotidine 5'-phosphate decarboxylase (276 aa).

The Proton donor role is filled by K96.

It belongs to the OMP decarboxylase family. Type 2 subfamily.

The enzyme catalyses orotidine 5'-phosphate + H(+) = UMP + CO2. The protein operates within pyrimidine metabolism; UMP biosynthesis via de novo pathway; UMP from orotate: step 2/2. In Porphyromonas gingivalis (strain ATCC BAA-308 / W83), this protein is Orotidine 5'-phosphate decarboxylase.